The chain runs to 326 residues: Thiamine thiazole synthase (326 aa).

Substrate-binding positions include C87, 108 to 109 (EA), G116, and V181. C215 carries the 2,3-didehydroalanine (Cys) modification. Substrate contacts are provided by residues D217, H232, M284, and 294-296 (RMG).

Belongs to the THI4 family. Homooctamer. The cofactor is Fe cation. In terms of processing, during the catalytic reaction, a sulfide is transferred from Cys-215 to a reaction intermediate, generating a dehydroalanine residue.

It localises to the cytoplasm. The protein localises to the nucleus. It carries out the reaction [ADP-thiazole synthase]-L-cysteine + glycine + NAD(+) = [ADP-thiazole synthase]-dehydroalanine + ADP-5-ethyl-4-methylthiazole-2-carboxylate + nicotinamide + 3 H2O + 2 H(+). In terms of biological role, involved in biosynthesis of the thiamine precursor thiazole. Catalyzes the conversion of NAD and glycine to adenosine diphosphate 5-(2-hydroxyethyl)-4-methylthiazole-2-carboxylic acid (ADT), an adenylated thiazole intermediate. The reaction includes an iron-dependent sulfide transfer from a conserved cysteine residue of the protein to a thiazole intermediate. The enzyme can only undergo a single turnover, which suggests it is a suicide enzyme. May have additional roles in adaptation to various stress conditions and in DNA damage tolerance. The chain is Thiamine thiazole synthase from Sclerotinia sclerotiorum (strain ATCC 18683 / 1980 / Ss-1) (White mold).